The sequence spans 606 residues: Mitogen-activated protein kinase kinase kinase 7 (606 aa).

An interaction with MAPK8IP1 region spans residues 1–300; it reads MSTASAASSS…FPGADEPLQY (300 aa). In terms of domain architecture, Protein kinase spans 36-291; that stretch reads IEVEEVVGRG…KIMTHLMRYF (256 aa). ATP is bound by residues 42–50 and Lys-63; that span reads VGRGAFGVV. Lys-72 participates in a covalent cross-link: Glycyl lysine isopeptide (Lys-Gly) (interchain with G-Cter in ubiquitin). Catalysis depends on Asp-156, which acts as the Proton acceptor. Lys-158 is covalently cross-linked (Glycyl lysine isopeptide (Lys-Gly) (interchain with G-Cter in ubiquitin)). Thr-184 and Thr-187 each carry phosphothreonine; by autocatalysis. Position 192 is a phosphoserine; by autocatalysis (Ser-192). Lys-209 participates in a covalent cross-link: Glycyl lysine isopeptide (Lys-Gly) (interchain with G-Cter in ubiquitin). Disordered regions lie at residues 301-338 and 354-391; these read PCQYSDEGQSNSATSTGSFMDIASTNTSNKSDTNMEQV and KNQAKQQSDSGRLSLGASRGSSVESLPPTSEGKRMSAD. The span at 306–338 shows a compositional bias: polar residues; it reads DEGQSNSATSTGSFMDIASTNTSNKSDTNMEQV. The span at 361–375 shows a compositional bias: low complexity; sequence SDSGRLSLGASRGSS. 3 positions are modified to phosphoserine: Ser-367, Ser-389, and Ser-439. Residues 443-452 are compositionally biased toward polar residues; it reads LTVTGTEPGQ. The tract at residues 443–492 is disordered; the sequence is LTVTGTEPGQVSSRSSSPSVRMITTSGPTSEKPARSLPWTPDDSTDTNGS. Residues 453–463 are compositionally biased toward low complexity; the sequence is VSSRSSSPSVR. Ser-455 carries the phosphoserine modification.

Belongs to the protein kinase superfamily. STE Ser/Thr protein kinase family. MAP kinase kinase kinase subfamily. Can form homodimer. Binds both upstream activators and downstream substrates in multimolecular complexes. Interacts with TAB1/MAP3K7IP1, TAB2/MAP3K7IP2 and TAB3/MAP3K7IP3. Identified in the TRIKA2 complex composed of MAP3K7/TAK1, TAB1/MAP3K7IP1 and TAB2/MAP3K7IP2. Interacts with PPM1L and PPM1B/PP2CB. Interaction with PP2A and PPP6C leads to its repressed activity. Interacts with TRAF6 and TAB1/MAP3K7IP1; during IL-1 signaling. Interacts with TAOK1 and TAOK2; interaction with TAOK2 interferes with MAP3K7 interaction with IKKA, thus preventing NF-kappa-B activation. Interacts with DYNC2I2 (via WD domains). Interacts with CYLD and RBCK1. Interacts with TGFBR1; induces MAP3K7/TAK1 activation by TRAF6. Interacts with MAPK8IP1 and SMAD6. Interacts with isoform 1 of VRK2. Interacts with DAB2; the interaction is induced by TGF-beta stimulation and may mediate TGF-beta stimulated JNK activation. Interacts with TRIM5. Part of a complex containing ITCH, NDFIP1 and MAP3K7. Interacts with PLEKHM1 (via N- and C-terminus). Found in a complex with SH3RF1, RAC2, MAP2K7/MKK7, MAPK8IP1/JIP1, MAPK8/JNK1 and MAPK9/JNK2. Interacts with SASH1. Interacts with RIPK1. Requires Mg(2+) as cofactor. In terms of processing, association with TAB1/MAP3K7IP1 promotes autophosphorylation at Ser-192 and subsequent activation. Association with TAB2/MAP3K7IP2, itself associated with free unanchored Lys-63 polyubiquitin chain, promotes autophosphorylation and subsequent activation of MAP3K7. Dephosphorylation at Ser-192 by PPM1B/PP2CB and at Thr-187 by PP2A and PPP6C leads to inactivation. Deubiquitinated by USP19; leading to negative regulation of TNF-alpha- and IL-1beta-triggered NF-kappa-B activation. Post-translationally, 'Lys-48'-linked polyubiquitination at Lys-72 is induced by TNFalpha, and leads to proteasomal degradation. Undergoes 'Lys-48'-linked polyubiquitination catalyzed by ITCH. 'Lys-63'-linked polyubiquitination at Lys-158 by TRIM8 does not lead to proteasomal degradation but contributes to autophosphorylation and activation. Deubiquitinated by CYLD, a protease that selectively cleaves 'Lys-63'-linked ubiquitin chains.

The protein resides in the cytoplasm. It is found in the cell membrane. It carries out the reaction L-seryl-[protein] + ATP = O-phospho-L-seryl-[protein] + ADP + H(+). The enzyme catalyses L-threonyl-[protein] + ATP = O-phospho-L-threonyl-[protein] + ADP + H(+). Activated by pro-inflammatory cytokines and in response to physical and chemical stresses, including osmotic stress, oxidative stress, arsenic and ultraviolet light irradiation. Activated by 'Lys-63'-linked polyubiquitination and by autophosphorylation. Association with TAB1/MAP3K7IP1 and TAB2/MAP3K7IP2 promotes activation through autophosphorylation, whereas PPM1B/PP2CB, PP2A and PPP6C dephosphorylation leads to inactivation. Ceramides are also able to activate MAP3K7/TAK1. Its function is as follows. Serine/threonine kinase which acts as an essential component of the MAP kinase signal transduction pathway. Plays an important role in the cascades of cellular responses evoked by changes in the environment. Mediates signal transduction of TRAF6, various cytokines including interleukin-1 (IL-1), transforming growth factor-beta (TGFB), TGFB-related factors like BMP2 and BMP4, toll-like receptors (TLR), tumor necrosis factor receptor CD40 and B-cell receptor (BCR). Once activated, acts as an upstream activator of the MKK/JNK signal transduction cascade and the p38 MAPK signal transduction cascade through the phosphorylation and activation of several MAP kinase kinases like MAP2K1/MEK1, MAP2K3/MKK3, MAP2K6/MKK6 and MAP2K7/MKK7. These MAP2Ks in turn activate p38 MAPKs and c-jun N-terminal kinases (JNKs); both p38 MAPK and JNK pathways control the transcription factors activator protein-1 (AP-1). Independently of MAP2Ks and p38 MAPKs, acts as a key activator of NF-kappa-B by promoting activation of the I-kappa-B-kinase (IKK) core complex. Mechanistically, recruited to polyubiquitin chains of RIPK2 and IKBKG/NEMO via TAB2/MAP3K7IP2 and TAB3/MAP3K7IP3, and catalyzes phosphorylation and activation of IKBKB/IKKB component of the IKK complex, leading to NF-kappa-B activation. In osmotic stress signaling, plays a major role in the activation of MAPK8/JNK1, but not that of NF-kappa-B. Promotes TRIM5 capsid-specific restriction activity. Phosphorylates RIPK1 at 'Ser-321' which positively regulates RIPK1 interaction with RIPK3 to promote necroptosis but negatively regulates RIPK1 kinase activity and its interaction with FADD to mediate apoptosis. Phosphorylates STING1 in response to cGAMP-activation, promoting association between STEEP1 and STING1 and STING1 translocation to COPII vesicles. In Rattus norvegicus (Rat), this protein is Mitogen-activated protein kinase kinase kinase 7 (Map3k7).